The following is a 579-amino-acid chain: Cytochrome P450 monooxygenase prx9 (579 aa).

A helical membrane pass occupies residues Leu6–Val25. N-linked (GlcNAc...) asparagine glycans are attached at residues Asn194, Asn292, and Asn390. Residue Cys512 participates in heme binding.

This sequence belongs to the cytochrome P450 family. The cofactor is heme.

Its subcellular location is the membrane. It participates in sesquiterpene biosynthesis. Cytochrome P450 monooxygenase; part of the gene cluster that mediates the biosynthesis of PR-toxin, a bicyclic sesquiterpene belonging to the eremophilane class and acting as a mycotoxin. The first step of the pathway is catalyzed by the aristolochene synthase which performs the cyclization of trans,trans-farnesyl diphosphate (FPP) to the bicyclic sesquiterpene aristolochene. Following the formation of aristolochene, the non-oxygenated aristolochene is converted to the trioxygenated intermediate eremofortin B, via 7-epi-neopetasone. This conversion appears to involve three enzymes, a hydroxysterol oxidase-like enzyme, the quinone-oxidase prx3 that forms the quinone-type-structure in the bicyclic nucleus of aristolochene with the C8-oxo group and the C-3 hydroxyl group, and the P450 monooxygenase prx9 that introduces the epoxide at the double bond between carbons 1 and 2. No monoxy or dioxy-intermediates have been reported to be released to the broth, so these three early oxidative reactions may be coupled together. Eremofortin B is further oxidized by another P450 monooxygenase, that introduces a second epoxide between carbons 7 and 11 prior to acetylation to eremofortin A by the acetyltransferase prx11. The second epoxidation may be performed by a second P450 monooxygenase. After the acetylation step, eremofortin A is converted to eremofortin C and then to PR-toxin. First the conversion of eremofortin A to eremofortin C proceeds by oxidation of the side chain of the molecule at C-12 and is catalyzed by the short-chain oxidoreductase prx1. The cytochrome P450 monooxygenase prx8 also plays a role in this step. The primary alcohol formed at C-12 is finally oxidized by the short-chain alcohol dehydrogenase prx4 that forms PR-toxin. In Penicillium rubens (strain ATCC 28089 / DSM 1075 / NRRL 1951 / Wisconsin 54-1255) (Penicillium chrysogenum), this protein is Cytochrome P450 monooxygenase prx9.